Reading from the N-terminus, the 598-residue chain is Elongation factor 4 (598 aa).

Residues lysine 4–lysine 185 enclose the tr-type G domain. Residues aspartate 16–threonine 21 and asparagine 132–aspartate 135 each bind GTP.

The protein belongs to the TRAFAC class translation factor GTPase superfamily. Classic translation factor GTPase family. LepA subfamily.

It is found in the cell membrane. It carries out the reaction GTP + H2O = GDP + phosphate + H(+). Functionally, required for accurate and efficient protein synthesis under certain stress conditions. May act as a fidelity factor of the translation reaction, by catalyzing a one-codon backward translocation of tRNAs on improperly translocated ribosomes. Back-translocation proceeds from a post-translocation (POST) complex to a pre-translocation (PRE) complex, thus giving elongation factor G a second chance to translocate the tRNAs correctly. Binds to ribosomes in a GTP-dependent manner. The polypeptide is Elongation factor 4 (Mycoplasma genitalium (strain ATCC 33530 / DSM 19775 / NCTC 10195 / G37) (Mycoplasmoides genitalium)).